The chain runs to 364 residues: Aminomethyltransferase (364 aa).

The protein belongs to the GcvT family. As to quaternary structure, the glycine cleavage system is composed of four proteins: P, T, L and H.

The catalysed reaction is N(6)-[(R)-S(8)-aminomethyldihydrolipoyl]-L-lysyl-[protein] + (6S)-5,6,7,8-tetrahydrofolate = N(6)-[(R)-dihydrolipoyl]-L-lysyl-[protein] + (6R)-5,10-methylene-5,6,7,8-tetrahydrofolate + NH4(+). Functionally, the glycine cleavage system catalyzes the degradation of glycine. The polypeptide is Aminomethyltransferase (Shewanella putrefaciens (strain CN-32 / ATCC BAA-453)).